Reading from the N-terminus, the 169-residue chain is Disulfide bond formation protein B 1 (169 aa).

Residues Met-1 to Phe-13 are Cytoplasmic-facing. A helical membrane pass occupies residues Trp-14 to Tyr-30. Over Leu-31–Leu-48 the chain is Periplasmic. Cys-40 and Cys-43 are oxidised to a cystine. A helical transmembrane segment spans residues Asp-49–Pro-64. Residues Arg-65–Gly-71 lie on the Cytoplasmic side of the membrane. Residues Ile-72–Trp-89 form a helical membrane-spanning segment. Over Ser-90–Val-145 the chain is Periplasmic. Cys-105 and Cys-131 are disulfide-bonded. The helical transmembrane segment at Trp-146–Phe-164 threads the bilayer. At Gly-165–Ala-169 the chain is on the cytoplasmic side.

This sequence belongs to the DsbB family.

The protein localises to the cell inner membrane. Its function is as follows. Required for disulfide bond formation in some periplasmic proteins. Acts by oxidizing the DsbA protein. This chain is Disulfide bond formation protein B 1, found in Pseudomonas aeruginosa (strain UCBPP-PA14).